The chain runs to 360 residues: MLLLLAEYLQQFHKGFAVFQYLSLRGILGVLTALVLSLWMGPWLIRTLQLRQIGQAVRTDGPQSHLSKSGTPTMGGALILSAIGISTLLWADLANRYVWVVLAVTLLFGAIGWVDDYRKVIEKNSRGLPSRWKYFWQSVFGLGAAIFLYMTAQTPVETTLILPLLKNIEIPLGIGFVILTYFVIVGSSNAVNLTDGLDGLAIMPTVMVGGGLGIFCYLSGNVNFAEYLLIPYIPGSGELIVFCGALIGAGLGFLWFNTYPAQVFMGDVGALALGAALGTIAVIVRQEVVLFIMGGVFVMETLSVMIQVASFKLTGKRVFRMAPIHHHFELKGWPEPRVIVRFWIITVILVLVGLATLKLR.

Transmembrane regions (helical) follow at residues 25–45 (RGILGVLTALVLSLWMGPWLI), 74–94 (MGGALILSAIGISTLLWADLA), 97–117 (YVWVVLAVTLLFGAIGWVDDY), 132–152 (WKYFWQSVFGLGAAIFLYMTA), 168–188 (IEIPLGIGFVILTYFVIVGSS), 199–219 (GLAIMPTVMVGGGLGIFCYLS), 236–256 (SGELIVFCGALIGAGLGFLWF), 263–283 (VFMGDVGALALGAALGTIAVI), 288–308 (VVLFIMGGVFVMETLSVMIQV), and 338–358 (VIVRFWIITVILVLVGLATLK).

It belongs to the glycosyltransferase 4 family. MraY subfamily. Mg(2+) is required as a cofactor.

It is found in the cell inner membrane. It catalyses the reaction UDP-N-acetyl-alpha-D-muramoyl-L-alanyl-gamma-D-glutamyl-meso-2,6-diaminopimeloyl-D-alanyl-D-alanine + di-trans,octa-cis-undecaprenyl phosphate = di-trans,octa-cis-undecaprenyl diphospho-N-acetyl-alpha-D-muramoyl-L-alanyl-D-glutamyl-meso-2,6-diaminopimeloyl-D-alanyl-D-alanine + UMP. It participates in cell wall biogenesis; peptidoglycan biosynthesis. In terms of biological role, catalyzes the initial step of the lipid cycle reactions in the biosynthesis of the cell wall peptidoglycan: transfers peptidoglycan precursor phospho-MurNAc-pentapeptide from UDP-MurNAc-pentapeptide onto the lipid carrier undecaprenyl phosphate, yielding undecaprenyl-pyrophosphoryl-MurNAc-pentapeptide, known as lipid I. The protein is Phospho-N-acetylmuramoyl-pentapeptide-transferase of Stutzerimonas stutzeri (strain A1501) (Pseudomonas stutzeri).